The sequence spans 180 residues: Bifunctional protein PyrR 1 (180 aa).

Substrate contacts are provided by residues 39–40 (TR), 103–111 (DDVLFTGRT), Arg-136, and Val-160. A PRPP-binding motif is present at residues 99–111 (VILVDDVLFTGRT).

The protein belongs to the purine/pyrimidine phosphoribosyltransferase family. PyrR subfamily. As to quaternary structure, homodimer and homohexamer; in equilibrium.

It carries out the reaction UMP + diphosphate = 5-phospho-alpha-D-ribose 1-diphosphate + uracil. In terms of biological role, regulates transcriptional attenuation of the pyrimidine nucleotide (pyr) operon by binding in a uridine-dependent manner to specific sites on pyr mRNA. This disrupts an antiterminator hairpin in the RNA and favors formation of a downstream transcription terminator, leading to a reduced expression of downstream genes. Also displays a weak uracil phosphoribosyltransferase activity which is not physiologically significant. The sequence is that of Bifunctional protein PyrR 1 (pyrR1) from Lactiplantibacillus plantarum (strain ATCC BAA-793 / NCIMB 8826 / WCFS1) (Lactobacillus plantarum).